The following is a 473-amino-acid chain: Argininosuccinate lyase (473 aa).

This sequence belongs to the lyase 1 family. Argininosuccinate lyase subfamily.

It is found in the cytoplasm. The enzyme catalyses 2-(N(omega)-L-arginino)succinate = fumarate + L-arginine. It functions in the pathway amino-acid biosynthesis; L-arginine biosynthesis; L-arginine from L-ornithine and carbamoyl phosphate: step 3/3. This is Argininosuccinate lyase from Streptomyces clavuligerus.